We begin with the raw amino-acid sequence, 335 residues long: Spliceosome-associated protein 49 (335 aa).

RRM domains lie at 13–84 (IYLG…PIRV) and 101–172 (LFVG…PITV). Positions 204 to 223 (VTPQSTLPPGFSPATPAPTS) are disordered.

Belongs to the SF3B4 family.

It is found in the nucleus. The sequence is that of Spliceosome-associated protein 49 (sap49) from Schizosaccharomyces pombe (strain 972 / ATCC 24843) (Fission yeast).